We begin with the raw amino-acid sequence, 112 residues long: UPF0212 protein Mboo_1659 (112 aa).

The protein belongs to the UPF0212 family.

In Methanoregula boonei (strain DSM 21154 / JCM 14090 / 6A8), this protein is UPF0212 protein Mboo_1659.